Reading from the N-terminus, the 1200-residue chain is PAN2-PAN3 deadenylation complex catalytic subunit Pan2 (1200 aa).

WD repeat units lie at residues 153–193 (DENE…QKYA), 195–231 (ETPGVTIMRQTNRFFFCGHTSGKVSLRDLRSFKVEHE), 244–280 (VHGNLLAACGFSSRLTGLACDRFLKVYDLRMMRAITP), and 328–367 (PVGPLLMTFDVSASKQALAFGDSEGCVHLWTDSPEPSFNP). The interval 368 to 484 (YSRETEFALP…PTGREEEPLH (117 aa)) is linker. One can recognise a USP domain in the interval 485–923 (TVSKKYRKVT…VPAILYYVKR (439 aa)). Ser-784 carries the post-translational modification Phosphoserine. The Exonuclease domain maps to 974–1146 (VGLDAEFVTL…EDARTALQLY (173 aa)). Residues Asp-977, Glu-979, Asp-1086, and Asp-1138 each coordinate a divalent metal cation. Ser-1188 carries the post-translational modification Phosphoserine.

It belongs to the peptidase C19 family. PAN2 subfamily. As to quaternary structure, forms a heterotrimer with an asymmetric homodimer of the regulatory subunit PAN3 to form the poly(A)-nuclease (PAN) deadenylation complex. Interacts with PAN3 isoform 1/Pan3L and isoform 3/Pan3S. Interacts with ZFP36. The cofactor is a divalent metal cation.

It is found in the cytoplasm. It localises to the P-body. The protein localises to the nucleus. The catalysed reaction is Exonucleolytic cleavage of poly(A) to 5'-AMP.. Positively regulated by the regulatory subunit PAN3. In terms of biological role, catalytic subunit of the poly(A)-nuclease (PAN) deadenylation complex, one of two cytoplasmic mRNA deadenylases involved in general and miRNA-mediated mRNA turnover. PAN specifically shortens poly(A) tails of RNA and the activity is stimulated by poly(A)-binding protein (PABP). PAN deadenylation is followed by rapid degradation of the shortened mRNA tails by the CCR4-NOT complex. Deadenylated mRNAs are then degraded by two alternative mechanisms, namely exosome-mediated 3'-5' exonucleolytic degradation, or deadenylation-dependent mRNA decaping and subsequent 5'-3' exonucleolytic degradation by XRN1. Also acts as an important regulator of the HIF1A-mediated hypoxic response. Required for HIF1A mRNA stability independent of poly(A) tail length regulation. The protein is PAN2-PAN3 deadenylation complex catalytic subunit Pan2 of Mus musculus (Mouse).